The primary structure comprises 530 residues: Ubiquitin carboxyl-terminal hydrolase 17 (530 aa).

Residues 80 to 375 (AGLQNMGNTC…QAYVLFYIQK (296 aa)) form the USP domain. Cysteine 89 acts as the Nucleophile in catalysis. Histidine 334 functions as the Proton acceptor in the catalytic mechanism. Basic and acidic residues-rich tracts occupy residues 382 to 392 (SESVSRGREPR) and 398 to 413 (DTDR…RDHP). Disordered stretches follow at residues 382-416 (SESV…PCLQ) and 490-530 (SSTT…LVCQ). A mediates interaction with SUDS3 region spans residues 399-530 (TDRRATQGEL…HSKRALLVCQ (132 aa)). Polar residues predominate over residues 498–510 (ESVNTGTLASLQG). Residues 511–524 (RTRRSKGKNKHSKR) show a composition bias toward basic residues.

This sequence belongs to the peptidase C19 family. USP17 subfamily. Interacts with SUDS3; the interaction is direct. In terms of tissue distribution, broadly expressed.

It is found in the nucleus. The protein resides in the endoplasmic reticulum. It carries out the reaction Thiol-dependent hydrolysis of ester, thioester, amide, peptide and isopeptide bonds formed by the C-terminal Gly of ubiquitin (a 76-residue protein attached to proteins as an intracellular targeting signal).. Its function is as follows. Deubiquitinating enzyme that removes conjugated ubiquitin from specific proteins to regulate different cellular processes. Regulates cell proliferation by deubiquitinating and inhibiting RCE1 thereby controlling the small GTPases NRAS and HRAS localization and activation. In parallel, mediates deubiquitination of CDC25A, preventing CDC25A degradation by the proteasome during the G1/S and G2/M phases promoting cell-cycle progression. Also regulates cell proliferation and apoptosis through deubiquitination of SUDS3 a regulator of histone deacetylation. Through activation of the Rho family GTPases RAC1A, CDC42 and RHOA, regulates cell migration. Through the cleavage of 'Lys-48'- and 'Lys-63'-linked polyubiquitin chains of the cytoplasmic innate immune receptors RIGI and IFIH1 stimulates the cellular response to viral infection. This chain is Ubiquitin carboxyl-terminal hydrolase 17 (USP17L2), found in Homo sapiens (Human).